The primary structure comprises 312 residues: 2-dehydropantoate 2-reductase (312 aa).

Residues 7–12, Asn105, and Ala131 contribute to the NADP(+) site; that span reads GAGAMG. Asn105 provides a ligand contact to substrate. The Proton donor role is filled by Lys187. 3 residues coordinate substrate: Asn191, Asn195, and Ser260. Glu273 contributes to the NADP(+) binding site.

This sequence belongs to the ketopantoate reductase family.

It localises to the cytoplasm. It catalyses the reaction (R)-pantoate + NADP(+) = 2-dehydropantoate + NADPH + H(+). Its pathway is cofactor biosynthesis; (R)-pantothenate biosynthesis; (R)-pantoate from 3-methyl-2-oxobutanoate: step 2/2. Functionally, catalyzes the NADPH-dependent reduction of ketopantoate into pantoic acid. The chain is 2-dehydropantoate 2-reductase from Lactococcus lactis subsp. lactis (strain IL1403) (Streptococcus lactis).